The chain runs to 608 residues: MDDDKGTDTTDAKEGCSGWFMLEAACSDDSDLDNSLEKLFEDGTESDVSDLINDDDTAAQGNSRELLCQQQSEECEQQIQYLKRKYFSPKAVQQLSPRLQSMNISPGHKSKRRLFVEHDSGLECSLNEAEDLTEEVEVPASAPAPAAQGGVGSGHYTSLLRCNNVKAVLLGKFKDAFGVSYNELTRQFRSNKTCCKHWVLAIYAAKDELIDASKQLLQQHCTYLWLQTFSPMSLYLCCFNVGKSRETVMRLLSSMLQVNENHILSEPPKIRSMIAALFWYKGSMNPNVYAFGEYPEWIMTQTMIHHQTADSVQFDLSEMIQWAYDQDYVDECTIAYQYARLADSNSNARAFLAHNSQAKYVRECAQMVRYYKRGEMRDMSISAWIHHCISKIEGDGHWQDIVKFLRYQGLNFIVFLDKFRTFLKNFPKKNCLLICGPPDTGKSMFSMSLMKALRGQVVSFANSKSHFWLQPLADAKLALLDDATEVCWQYIDAFLRNGLDGNMVSLDMKHRAPCQMKFPPLIITSNISLKKEKKFPYLHSRIYEFEFPNKFPFDANDTPLFKLTDQSWASFFKRLWTQLELSDQEEEGENGETQRTFQCTTREVNGLI.

The short motif at 83–85 (KRK) is the Nuclear localization signal element. 2 positions are modified to phosphoserine; by host: Ser88 and Ser96. A DNA-binding region region spans residues 148 to 311 (QGGVGSGHYT…TMIHHQTADS (164 aa)). The 151-residue stretch at 410 to 560 (LNFIVFLDKF…FPFDANDTPL (151 aa)) folds into the SF3 helicase domain. 436–443 (GPPDTGKS) contacts ATP. Lys517 participates in a covalent cross-link: Glycyl lysine isopeptide (Lys-Gly) (interchain with G-Cter in SUMO).

This sequence belongs to the papillomaviridae E1 protein family. Can form hexamers. Interacts with E2 protein; this interaction increases E1 DNA binding specificity. Interacts with host DNA polymerase subunit POLA2. Interacts with host single stranded DNA-binding protein RPA1. Interacts with host TOP1; this interaction stimulates the enzymatic activity of TOP1. In terms of processing, phosphorylated. Sumoylated.

The protein resides in the host nucleus. It catalyses the reaction Couples ATP hydrolysis with the unwinding of duplex DNA by translocating in the 3'-5' direction.. The enzyme catalyses ATP + H2O = ADP + phosphate + H(+). Its function is as follows. ATP-dependent DNA 3'-5' helicase required for initiation of viral DNA replication. It forms a complex with the viral E2 protein. The E1-E2 complex binds to the replication origin which contains binding sites for both proteins. During the initial step, a dimer of E1 interacts with a dimer of protein E2 leading to a complex that binds the viral origin of replication with high specificity. Then, a second dimer of E1 displaces the E2 dimer in an ATP-dependent manner to form the E1 tetramer. Following this, two E1 monomers are added to each half of the site, which results in the formation of two E1 trimers on the viral ori. Subsequently, two hexamers will be created. The double hexamer acts as a bi-directional helicase machinery and unwinds the viral DNA and then recruits the host DNA polymerase to start replication. The sequence is that of Replication protein E1 from Homo sapiens (Human).